The following is a 569-amino-acid chain: Tetratricopeptide repeat protein 22 (569 aa).

TPR repeat units lie at residues 66 to 99 (PAVR…HPGN), 101 to 133 (NAWA…MGLA), 203 to 237 (ATLY…LRQV), 260 to 294 (KDTF…AKNQ), 295 to 328 (PPIL…LRDP), 383 to 418 (FKAY…ALVF), and 432 to 465 (PELQ…DDAG).

In Homo sapiens (Human), this protein is Tetratricopeptide repeat protein 22 (TTC22).